Here is a 219-residue protein sequence, read N- to C-terminus: Ras-related protein Rab-3B (219 aa).

N-acetylalanine is present on Ala-2. Positions 31, 32, 33, 34, 35, 36, 37, 49, and 53 each coordinate GTP. Thr-36 serves as a coordination point for Mg(2+). The Switch 1 motif lies at 45-58 (DTFTPAFVSTVGID). Residues Thr-54 and Asp-77 each coordinate Mg(2+). The short motif at 78 to 96 (TAGQERYRTITTAYYRGAM) is the Switch 2 element. Gly-80 contacts GTP. Residue Thr-86 is modified to Phosphothreonine. Residues Asn-135, Lys-136, Asp-138, Ala-166, and Lys-167 each coordinate GTP. A phosphoserine mark is found at Ser-188 and Ser-190. 2 S-geranylgeranyl cysteine lipidation sites follow: Cys-217 and Cys-219. Cys-219 is modified (cysteine methyl ester).

It belongs to the small GTPase superfamily. Rab family. Interacts with RPH3A and RPH3AL. Interacts with RIMS1. Interacts with RIMS2. The GTP-bound form interacts with GAS8/DRC4 (via coiled-coil domains). Interacts with GDI2, and CHM; phosphorylation at Thr-86 disrupts these interactions. Interacts with MADD (via uDENN domain); the GTP-bound form is preferred for interaction. It depends on Mg(2+) as a cofactor. Phosphorylation of Thr-86 in the switch II region by LRRK2 prevents the association of RAB regulatory proteins, including CHM and RAB GDP dissociation inhibitor GDI2.

It localises to the cell membrane. The protein resides in the golgi apparatus. The catalysed reaction is GTP + H2O = GDP + phosphate + H(+). Regulated by guanine nucleotide exchange factors (GEFs) which promote the exchange of bound GDP for free GTP. Regulated by GTPase activating proteins (GAPs) which increase the GTP hydrolysis activity. Inhibited by GDP dissociation inhibitors (GDIs) which prevent Rab-GDP dissociation. In terms of biological role, the small GTPases Rab are key regulators of intracellular membrane trafficking, from the formation of transport vesicles to their fusion with membranes. Rabs cycle between an inactive GDP-bound form and an active GTP-bound form that is able to recruit to membranes different sets of downstream effectors directly responsible for vesicle formation, movement, tethering and fusion. This Rattus norvegicus (Rat) protein is Ras-related protein Rab-3B.